A 603-amino-acid polypeptide reads, in one-letter code: Protein SHORT-ROOT 2 (603 aa).

Disordered regions lie at residues 11-58 and 106-140; these read HHHH…HSHS and DFSSSSSSRQFHSGTGAPSSAPVPPPPSATTSSAG. Over residues 31-44 the composition is skewed to low complexity; that stretch reads SYPSSRGSTSSPSS. Positions 45–58 are enriched in basic residues; that stretch reads HHTHNHTYYHHSHS. The segment covering 108-125 has biased composition (low complexity); the sequence is SSSSSSRQFHSGTGAPSS. Positions 179-602 constitute a GRAS domain; sequence AAPSSSGRWA…QPVVWASAWK (424 aa). A leucine repeat I (LRI) region spans residues 186–249; the sequence is RWAAQLLMEC…LTTSGPRTLR (64 aa). Residues 268 to 354 form a VHIID region; that stretch reads ALKFQELSPW…DTPHLSITTV (87 aa). The short motif at 318–322 is the VHIID element; it reads LHILD. The segment at 370–406 is leucine repeat II (LRII); the sequence is EIGQRLEKFARLMGVPFSFRAVHHSGDLADLDLAALD. Residues 416–514 form a PFYRE region; sequence LAVNCVNALR…ERAVGRAIVD (99 aa). Residues 517-602 are SAW; sequence SCPASQSAER…QPVVWASAWK (86 aa).

Belongs to the GRAS family. As to quaternary structure, does not interact with SCR1.

The protein resides in the nucleus. Its function is as follows. Putative transcription factor involved in asymmetric cell division. In Oryza sativa subsp. japonica (Rice), this protein is Protein SHORT-ROOT 2 (SHR2).